Reading from the N-terminus, the 313-residue chain is Protein YABBY 3 (313 aa).

The C4-type zinc finger occupies 65–92 (CHYCDTVLVVSVPSSSLFETVTVRCGHC). Disordered regions lie at residues 107–149 (TTAA…SLLD) and 180–221 (NNSP…KRQR). Pro residues predominate over residues 112 to 128 (APPPPPPPPPPPPPPAA).

It belongs to the YABBY family. As to expression, expressed in shoot apex and young inflorescences.

The protein localises to the nucleus. The chain is Protein YABBY 3 (YAB3) from Oryza sativa subsp. japonica (Rice).